The following is an 88-amino-acid chain: ATP synthase subunit 9, mitochondrial (88 aa).

2 helical membrane-spanning segments follow: residues 8-28 and 45-72; these read IGAG…GNVF and LFGY…LILF.

Belongs to the ATPase C chain family. F-type ATPases have 2 components, CF(1) - the catalytic core - and CF(0) - the membrane proton channel. CF(1) has five subunits: alpha(3), beta(3), gamma(1), delta(1), epsilon(1). CF(0) has three main subunits: a, b and c.

It is found in the mitochondrion membrane. It carries out the reaction ATP + H2O + 4 H(+)(in) = ADP + phosphate + 5 H(+)(out). Its function is as follows. This protein is one of the chains of the nonenzymatic membrane component (F0) of mitochondrial ATPase. The polypeptide is ATP synthase subunit 9, mitochondrial (ATP9) (Beta vulgaris (Sugar beet)).